Here is a 201-residue protein sequence, read N- to C-terminus: Kinetochore protein SPC24 homolog (201 aa).

Residues 78-133 (DIAAEDEIERLQKELDEEMEREFKLKDELRLVADELKDLNAQLSSIDEHKQSTKRK) are a coiled coil.

The protein belongs to the SPC24 family. Component of the NDC80 complex, which consists of NDC80, NUF2, SPC24 and SPC25. In terms of tissue distribution, highly expressed in actively dividing tissues, such as shoot apical meristem (SAM), root apical meristem (RAM), vasculature, newly emerging leaves and inflorescence shoots.

It localises to the chromosome. The protein localises to the centromere. Its function is as follows. Acts as a component of the essential kinetochore-associated NDC80 complex, which is required for chromosome segregation and spindle checkpoint activity to ensure proper cell division. Required for the maintenance of plant architecture. The chain is Kinetochore protein SPC24 homolog from Arabidopsis thaliana (Mouse-ear cress).